Here is a 161-residue protein sequence, read N- to C-terminus: RNA pyrophosphohydrolase (161 aa).

Positions 6–149 (GYRPNVGIIL…KKDVYRRALK (144 aa)) constitute a Nudix hydrolase domain. A Nudix box motif is present at residues 38-59 (GGIKSDETPEEALFRELKEEVG).

It belongs to the Nudix hydrolase family. RppH subfamily. Requires a divalent metal cation as cofactor.

Accelerates the degradation of transcripts by removing pyrophosphate from the 5'-end of triphosphorylated RNA, leading to a more labile monophosphorylated state that can stimulate subsequent ribonuclease cleavage. This Marinomonas sp. (strain MWYL1) protein is RNA pyrophosphohydrolase.